The chain runs to 112 residues: ATP synthase epsilon chain (112 aa).

Belongs to the ATPase epsilon chain family. In terms of assembly, F-type ATPases have 2 components, CF(1) - the catalytic core - and CF(0) - the membrane proton channel. CF(1) has five subunits: alpha(3), beta(3), gamma(1), delta(1), epsilon(1). CF(0) has three main subunits: a, b and c.

It is found in the cell membrane. Its function is as follows. Produces ATP from ADP in the presence of a proton gradient across the membrane. The sequence is that of ATP synthase epsilon chain from Rickettsia africae (strain ESF-5).